The following is a 511-amino-acid chain: Ribonuclease Y (511 aa).

The helical transmembrane segment at valine 3 to phenylalanine 23 threads the bilayer. The KH domain maps to serine 201–leucine 261. One can recognise an HD domain in the interval leucine 327 to alanine 420.

This sequence belongs to the RNase Y family.

Its subcellular location is the cell membrane. Functionally, endoribonuclease that initiates mRNA decay. The polypeptide is Ribonuclease Y (Bacteroides fragilis (strain ATCC 25285 / DSM 2151 / CCUG 4856 / JCM 11019 / LMG 10263 / NCTC 9343 / Onslow / VPI 2553 / EN-2)).